The following is a 270-amino-acid chain: Phosphatidylglycerol--prolipoprotein diacylglyceryl transferase (270 aa).

A run of 3 helical transmembrane segments spans residues 17–37 (LAIH…MFLG), 63–83 (ILFL…CLFY), and 95–115 (IFYI…VIAS). Arginine 146 is an a 1,2-diacyl-sn-glycero-3-phospho-(1'-sn-glycerol) binding site. Transmembrane regions (helical) follow at residues 182–202 (SQVY…WLYA), 209–229 (GEVA…AEYF), and 243–263 (MSMG…LWVW).

Belongs to the Lgt family.

It is found in the cell inner membrane. The enzyme catalyses L-cysteinyl-[prolipoprotein] + a 1,2-diacyl-sn-glycero-3-phospho-(1'-sn-glycerol) = an S-1,2-diacyl-sn-glyceryl-L-cysteinyl-[prolipoprotein] + sn-glycerol 1-phosphate + H(+). The protein operates within protein modification; lipoprotein biosynthesis (diacylglyceryl transfer). Functionally, catalyzes the transfer of the diacylglyceryl group from phosphatidylglycerol to the sulfhydryl group of the N-terminal cysteine of a prolipoprotein, the first step in the formation of mature lipoproteins. The chain is Phosphatidylglycerol--prolipoprotein diacylglyceryl transferase from Paracidovorax citrulli (strain AAC00-1) (Acidovorax citrulli).